A 372-amino-acid chain; its full sequence is Transcription factor YY2 (372 aa).

The segment at 32–102 is mediates transcriptional activation; that stretch reads MEDIPTESVQ…SDNQLGNDLE (71 aa). Positions 126–136 are enriched in low complexity; it reads SAASTSTSTQS. 2 disordered regions span residues 126–172 and 186–210; these read SAAS…WEQK and TMWS…PPDY. Positions 137-146 are enriched in basic residues; it reads RSKKPSKKPS. Composition is skewed to polar residues over residues 154 to 165 and 186 to 196; these read EANPAGSSSSLG and TMWSPNDNNDQ. The segment at 237 to 372 is mediates transcriptional repression; it reads EFTKVKPKRS…LTHVKTKNNP (136 aa). 4 C2H2-type zinc fingers span residues 254–278, 283–305, 311–335, and 341–365; these read VPCS…LHIH, HVCA…QLVH, FQCT…LRIH, and FVCP…ILTH.

It belongs to the YY transcription factor family. Expressed in kidney, liver, spleen and testis but not in colon.

It localises to the nucleus. Functionally, functions as a multifunctional transcription factor that may exhibit positive and negative control on a large number of genes. May antagonize YY1 and function in development and differentiation. The sequence is that of Transcription factor YY2 (YY2) from Homo sapiens (Human).